The following is a 369-amino-acid chain: Xylene/toluene monooxygenase hydroxylase component XylM (369 aa).

3 consecutive transmembrane segments (helical) span residues 8–28 (LIPV…YWVW), 60–80 (LTQY…VFGV), and 91–111 (LQVA…TLPV). Residues His113, His117, His143, His147, and His148 each coordinate Fe cation. Residues 207-227 (VALLLALPGLVSYLGGPALGL) form a helical membrane-spanning segment. His282, His285, and His286 together coordinate Fe cation. Residues 305–325 (MPSLFVCFLLGLIPPLWFALI) traverse the membrane as a helical segment.

Belongs to the fatty acid desaturase type 1 family. AlkB subfamily. The xylene/toluene monooxygenase is composed of two subunits: the electron transfer component XylA and the hydroxylase component XylM. Fe(2+) serves as cofactor.

It is found in the cell inner membrane. It carries out the reaction m-xylene + 2 reduced [2Fe-2S]-[ferredoxin] + O2 + 2 H(+) = 3-methylbenzyl alcohol + 2 oxidized [2Fe-2S]-[ferredoxin] + H2O. The catalysed reaction is p-xylene + 2 reduced [2Fe-2S]-[ferredoxin] + O2 + 2 H(+) = 4-methylbenzyl alcohol + 2 oxidized [2Fe-2S]-[ferredoxin] + H2O. The enzyme catalyses toluene + 2 reduced [2Fe-2S]-[ferredoxin] + O2 + 2 H(+) = benzyl alcohol + 2 oxidized [2Fe-2S]-[ferredoxin] + H2O. In terms of biological role, component of a monooxygenase that catalyzes the first step in the degradation of xylenes and toluenes. XylM catalyzes the hydroxylation of the methyl side chain of xylenes and toluenes. The electrons are provided by the electron transfer component XylA. The best substrates are m-xylene and p-xylene, followed by toluene. Shows weak activity with o-xylene. In vitro, is also active with substituted compounds, such as chlorotoluenes. Cannot use benzyl alcohol. The protein is Xylene/toluene monooxygenase hydroxylase component XylM of Pseudomonas putida (Arthrobacter siderocapsulatus).